We begin with the raw amino-acid sequence, 159 residues long: uncharacterized protein (159 aa).

Transmembrane regions (helical) follow at residues 59–79 (IGALAAMLAVLSFALGCALVY) and 91–113 (VFSVLSGLLYGGGAVLWGLRRVC).

The protein localises to the cell membrane. This is an uncharacterized protein from Treponema pallidum (strain Nichols).